Consider the following 4579-residue polypeptide: Sacsin (4579 aa).

Positions 9–84 (VPVTVLPGCV…FVNLQSKGLK (76 aa)) constitute a Ubiquitin-like domain. N6-acetyllysine is present on Lys943. Ser1779 and Ser2511 each carry phosphoserine. At Thr2516 the chain carries Phosphothreonine. At Ser3435 the chain carries Phosphoserine. Disordered stretches follow at residues 4248–4273 (PEES…TPGL) and 4279–4298 (LFSG…PKKL). Polar residues predominate over residues 4254-4267 (SRDSAPSTPTSPTE). Thr4261 is modified (phosphothreonine). Ser4264 is modified (phosphoserine). Over residues 4288–4298 (TSSKHQSPKKL) the composition is skewed to basic residues. The J domain maps to 4306–4393 (ILKEVTSVVE…ASRFQSDKYS (88 aa)). Residues 4405-4427 (ATSHKSERQQQNKEKCPPSAGQT) are disordered. Over residues 4406–4420 (TSHKSERQQQNKEKC) the composition is skewed to basic and acidic residues. The region spanning 4451–4567 (LRQARANFSA…MRVMECTACI (117 aa)) is the HEPN domain.

As to expression, highly expressed in the central nervous system. Also found in skeletal muscle and at low levels in pancreas.

Its subcellular location is the cytoplasm. Functionally, co-chaperone which acts as a regulator of the Hsp70 chaperone machinery and may be involved in the processing of other ataxia-linked proteins. The polypeptide is Sacsin (SACS) (Homo sapiens (Human)).